A 153-amino-acid chain; its full sequence is NADH dehydrogenase [ubiquinone] 1 beta subcomplex subunit 11, mitochondrial (153 aa).

The transit peptide at Met1–Trp29 directs the protein to the mitochondrion. Residues Pro40–Tyr76 form a disordered region. Over residues Leu66–Tyr76 the composition is skewed to basic and acidic residues. Residues Leu89–Leu109 form a helical membrane-spanning segment.

The protein belongs to the complex I NDUFB11 subunit family. Complex I is composed of 45 different subunits. Interacts with BCAP31. As to expression, ubiquitous.

It localises to the mitochondrion inner membrane. In terms of biological role, accessory subunit of the mitochondrial membrane respiratory chain NADH dehydrogenase (Complex I), that is believed not to be involved in catalysis. Complex I functions in the transfer of electrons from NADH to the respiratory chain. The immediate electron acceptor for the enzyme is believed to be ubiquinone. In Homo sapiens (Human), this protein is NADH dehydrogenase [ubiquinone] 1 beta subcomplex subunit 11, mitochondrial (NDUFB11).